The chain runs to 396 residues: Phosphoglycerate kinase (396 aa).

Residues 21 to 23, Arg36, 59 to 62, Arg119, and Arg156 each bind substrate; these read DFN and HLGK. ATP is bound by residues Lys206, Gly294, Glu325, and 352–355; that span reads GGDS.

It belongs to the phosphoglycerate kinase family. Monomer.

Its subcellular location is the cytoplasm. It carries out the reaction (2R)-3-phosphoglycerate + ATP = (2R)-3-phospho-glyceroyl phosphate + ADP. It functions in the pathway carbohydrate degradation; glycolysis; pyruvate from D-glyceraldehyde 3-phosphate: step 2/5. The chain is Phosphoglycerate kinase from Listeria innocua serovar 6a (strain ATCC BAA-680 / CLIP 11262).